A 130-amino-acid polypeptide reads, in one-letter code: Small ribosomal subunit protein uS11 (130 aa).

This sequence belongs to the universal ribosomal protein uS11 family. Part of the 30S ribosomal subunit. Interacts with proteins S7 and S18. Binds to IF-3.

In terms of biological role, located on the platform of the 30S subunit, it bridges several disparate RNA helices of the 16S rRNA. Forms part of the Shine-Dalgarno cleft in the 70S ribosome. This is Small ribosomal subunit protein uS11 from Sulfurimonas denitrificans (strain ATCC 33889 / DSM 1251) (Thiomicrospira denitrificans (strain ATCC 33889 / DSM 1251)).